The following is a 59-amino-acid chain: DNA gyrase inhibitor YacG (59 aa).

Cys9, Cys12, Cys27, and Cys31 together coordinate Zn(2+).

It belongs to the DNA gyrase inhibitor YacG family. In terms of assembly, interacts with GyrB. It depends on Zn(2+) as a cofactor.

Inhibits all the catalytic activities of DNA gyrase by preventing its interaction with DNA. Acts by binding directly to the C-terminal domain of GyrB, which probably disrupts DNA binding by the gyrase. This is DNA gyrase inhibitor YacG from Geotalea daltonii (strain DSM 22248 / JCM 15807 / FRC-32) (Geobacter daltonii).